Here is a 440-residue protein sequence, read N- to C-terminus: 6-phospho-alpha-glucosidase (440 aa).

4-70 (FSVVIAGGGS…PEIEFSYTTD (67 aa)) is an NAD(+) binding site. The substrate site is built by Arg-93 and Asn-147. Position 169 (Cys-169) interacts with Mn(2+). Asp-170 serves as the catalytic Proton donor. His-200 is a Mn(2+) binding site. Tyr-263 serves as the catalytic Proton acceptor. Residue Arg-283 coordinates substrate.

As to quaternary structure, homodimer. NAD(+) serves as cofactor. It depends on Mn(2+) as a cofactor. Co(2+) is required as a cofactor. The cofactor is Ni(2+).

The enzyme catalyses alpha-maltose 6'-phosphate + H2O = D-glucose 6-phosphate + D-glucose. It functions in the pathway glycan biosynthesis; sucrose metabolism. Functionally, is involved in the catabolism of alpha-glycosides accumulated via a phosphoenolpyruvate-dependent phosphotransferase system (PEP-PTS). Hydrolyzes a wide variety of 6-phospho-alpha-D-glucosides including maltose-6'-phosphate, isomaltose-6'-phosphate, maltitol-6-phosphate, trehalose-6-phosphate and the 6'-phosphorylated derivatives of the five linkage-isomeric alpha-D-glucosyl-D-fructoses: trehalulose-6'-phosphate, turanose-6'-phosphate, maltulose-6'-phosphate, leucrose-6'-phosphate, and palatinose-6'-phosphate. However, sucrose-6-phosphate is not a substrate for this enzyme. The protein is 6-phospho-alpha-glucosidase of Klebsiella pneumoniae.